The sequence spans 248 residues: Probable transcriptional regulatory protein Bind_0345 (248 aa).

It belongs to the TACO1 family.

It is found in the cytoplasm. This chain is Probable transcriptional regulatory protein Bind_0345, found in Beijerinckia indica subsp. indica (strain ATCC 9039 / DSM 1715 / NCIMB 8712).